A 185-amino-acid chain; its full sequence is Transmembrane protein 140 (185 aa).

Over 1–11 (MAGPRPRWRDQ) the chain is Cytoplasmic. A helical transmembrane segment spans residues 12 to 32 (LLFMSIIVLVIVVICLMFYAL). The Extracellular portion of the chain corresponds to 33-77 (LWEAGNLTDLPNLRIGFYNFCLWNEDTSTLQCHQFPELEALGVPR). Residue asparagine 38 is glycosylated (N-linked (GlcNAc...) asparagine). Residues 78-98 (VGLGLARLGVYGSLVLTLFAP) traverse the membrane as a helical segment. Residues 99 to 114 (QPLLLAQCNSDERAWR) are Cytoplasmic-facing. A helical transmembrane segment spans residues 115-135 (LAVGFLAVSSVLLAGGLGLFL). Over 136-150 (SYVWKWVRLSLPGPG) the chain is Extracellular. Residues 151–171 (FLALGSAQALLILLLIAMAVF) form a helical membrane-spanning segment. The Cytoplasmic portion of the chain corresponds to 172–185 (PLRAERAESKLESC).

Expression significantly higher in gliomas than in normal brain tissues.

Its subcellular location is the membrane. This chain is Transmembrane protein 140 (TMEM140), found in Homo sapiens (Human).